The sequence spans 503 residues: Putative (R)-citramalate synthase CimA (503 aa).

The region spanning 9-257 (IRFFDTTLRD…DTGIATEELY (249 aa)) is the Pyruvate carboxyltransferase domain.

Belongs to the alpha-IPM synthase/homocitrate synthase family. As to quaternary structure, homodimer.

The enzyme catalyses pyruvate + acetyl-CoA + H2O = (3R)-citramalate + CoA + H(+). It functions in the pathway amino-acid biosynthesis; L-isoleucine biosynthesis; 2-oxobutanoate from pyruvate: step 1/3. In terms of biological role, catalyzes the condensation of pyruvate and acetyl-coenzyme A to form (R)-citramalate. The protein is Putative (R)-citramalate synthase CimA of Methanoculleus marisnigri (strain ATCC 35101 / DSM 1498 / JR1).